Reading from the N-terminus, the 211-residue chain is Probable nicotinate-nucleotide adenylyltransferase (211 aa).

The protein belongs to the NadD family.

The enzyme catalyses nicotinate beta-D-ribonucleotide + ATP + H(+) = deamido-NAD(+) + diphosphate. Its pathway is cofactor biosynthesis; NAD(+) biosynthesis; deamido-NAD(+) from nicotinate D-ribonucleotide: step 1/1. In terms of biological role, catalyzes the reversible adenylation of nicotinate mononucleotide (NaMN) to nicotinic acid adenine dinucleotide (NaAD). The protein is Probable nicotinate-nucleotide adenylyltransferase of Lactiplantibacillus plantarum (strain ATCC BAA-793 / NCIMB 8826 / WCFS1) (Lactobacillus plantarum).